The sequence spans 713 residues: Elongation factor G (713 aa).

The 283-residue stretch at 8–290 folds into the tr-type G domain; sequence ERYRNFGIMA…GVIQLLPSPV (283 aa). GTP-binding positions include 17–24, 88–92, and 142–145; these read AHIDAGKT, DTPGH, and NKMD.

Belongs to the TRAFAC class translation factor GTPase superfamily. Classic translation factor GTPase family. EF-G/EF-2 subfamily.

It localises to the cytoplasm. Catalyzes the GTP-dependent ribosomal translocation step during translation elongation. During this step, the ribosome changes from the pre-translocational (PRE) to the post-translocational (POST) state as the newly formed A-site-bound peptidyl-tRNA and P-site-bound deacylated tRNA move to the P and E sites, respectively. Catalyzes the coordinated movement of the two tRNA molecules, the mRNA and conformational changes in the ribosome. This Stenotrophomonas maltophilia (strain K279a) protein is Elongation factor G.